Here is a 327-residue protein sequence, read N- to C-terminus: Glutaminase (327 aa).

Substrate-binding residues include S92, N143, N195, Y218, Y263, and V281.

Belongs to the glutaminase family. In terms of assembly, homotetramer.

It catalyses the reaction L-glutamine + H2O = L-glutamate + NH4(+). This chain is Glutaminase, found in Synechocystis sp. (strain ATCC 27184 / PCC 6803 / Kazusa).